A 120-amino-acid chain; its full sequence is Aspartate 1-decarboxylase (120 aa).

S24 acts as the Schiff-base intermediate with substrate; via pyruvic acid in catalysis. S24 carries the post-translational modification Pyruvic acid (Ser). T56 lines the substrate pocket. The active-site Proton donor is Y57. 70 to 72 (GAA) is a binding site for substrate.

This sequence belongs to the PanD family. As to quaternary structure, heterooctamer of four alpha and four beta subunits. Pyruvate is required as a cofactor. In terms of processing, is synthesized initially as an inactive proenzyme, which is activated by self-cleavage at a specific serine bond to produce a beta-subunit with a hydroxyl group at its C-terminus and an alpha-subunit with a pyruvoyl group at its N-terminus.

The protein localises to the cytoplasm. It catalyses the reaction L-aspartate + H(+) = beta-alanine + CO2. Its pathway is cofactor biosynthesis; (R)-pantothenate biosynthesis; beta-alanine from L-aspartate: step 1/1. Catalyzes the pyruvoyl-dependent decarboxylation of aspartate to produce beta-alanine. The chain is Aspartate 1-decarboxylase from Pyrobaculum islandicum (strain DSM 4184 / JCM 9189 / GEO3).